The sequence spans 200 residues: ATP-dependent Clp protease proteolytic subunit 1 (200 aa).

Catalysis depends on Ser-98, which acts as the Nucleophile. The active site involves His-123.

This sequence belongs to the peptidase S14 family. Fourteen ClpP subunits assemble into 2 heptameric rings which stack back to back to give a disk-like structure with a central cavity, resembling the structure of eukaryotic proteasomes.

The protein resides in the cytoplasm. The enzyme catalyses Hydrolysis of proteins to small peptides in the presence of ATP and magnesium. alpha-casein is the usual test substrate. In the absence of ATP, only oligopeptides shorter than five residues are hydrolyzed (such as succinyl-Leu-Tyr-|-NHMec, and Leu-Tyr-Leu-|-Tyr-Trp, in which cleavage of the -Tyr-|-Leu- and -Tyr-|-Trp bonds also occurs).. Its function is as follows. Cleaves peptides in various proteins in a process that requires ATP hydrolysis. Has a chymotrypsin-like activity. Plays a major role in the degradation of misfolded proteins. In Mycobacterium leprae (strain TN), this protein is ATP-dependent Clp protease proteolytic subunit 1.